We begin with the raw amino-acid sequence, 111 residues long: Ig kappa chain V-III region PC 2880/PC 1229 (111 aa).

A framework-1 region spans residues 1-23 (DIVLTQSPASLAVSLGQRATISC). The cysteines at positions 23 and 92 are disulfide-linked. Residues 24 to 38 (RASESVDNYGISFMN) are complementarity-determining-1. Residues 39–53 (WFQQKPGQPPKLLIY) are framework-2. Residues 54–60 (AASNQGS) are complementarity-determining-2. The segment at 61–92 (GVPARFSGSGSGTDFSLNIHPMEEDDTAMYFC) is framework-3. Residues 93-101 (QQSKEVPWT) are complementarity-determining-3. The segment at 102 to 111 (FGGGTKLEIK) is framework-4.

The polypeptide is Ig kappa chain V-III region PC 2880/PC 1229 (Mus musculus (Mouse)).